We begin with the raw amino-acid sequence, 329 residues long: DNA-directed RNA polymerase subunit alpha (329 aa).

The segment at 1–234 is alpha N-terminal domain (alpha-NTD); the sequence is MQGSVTEFLK…EQLDAFVELR (234 aa). The segment at 248–329 is alpha C-terminal domain (alpha-CTD); it reads FDPILLRPVD…WPPASLADDL (82 aa).

Belongs to the RNA polymerase alpha chain family. Homodimer. The RNAP catalytic core consists of 2 alpha, 1 beta, 1 beta' and 1 omega subunit. When a sigma factor is associated with the core the holoenzyme is formed, which can initiate transcription.

It catalyses the reaction RNA(n) + a ribonucleoside 5'-triphosphate = RNA(n+1) + diphosphate. In terms of biological role, DNA-dependent RNA polymerase catalyzes the transcription of DNA into RNA using the four ribonucleoside triphosphates as substrates. In Shewanella putrefaciens (strain CN-32 / ATCC BAA-453), this protein is DNA-directed RNA polymerase subunit alpha.